The chain runs to 324 residues: uncharacterized protein (324 aa).

Helical transmembrane passes span 4 to 24 (GNKV…PEFM), 63 to 83 (AALL…EGIL), 106 to 128 (ALFY…ISFL), 132 to 151 (WQVQ…SHLL), 179 to 199 (LADI…AVTL), 209 to 229 (GLDG…LVIM), 246 to 266 (LETA…LYTL), and 282 to 302 (GTWK…GWFM).

The protein belongs to the TerC family.

The protein resides in the cell membrane. This is an uncharacterized protein from Bacillus subtilis (strain 168).